The chain runs to 1588 residues: Centrosomal protein of 170 kDa (1588 aa).

The FHA domain maps to 23-73 (IFVGRDDCELMLQSRSVDKQHAVINYDASMDEHLVKDLGSLNGTFVNDVRI). 4 disordered regions span residues 121-172 (LSQK…MPRG), 299-323 (KFTS…GIQT), 338-447 (QNNP…EEPS), and 461-508 (SGSL…NPNS). S141 carries the post-translational modification Phosphoserine. Basic and acidic residues predominate over residues 155 to 164 (EALKSEEKPM). Basic and acidic residues predominate over residues 347–357 (ERTEEDSKSIK). A phosphoserine mark is found at S355 and S358. The residue at position 363 (Y363) is a Phosphotyrosine. A compositionally biased stretch (basic and acidic residues) spans 407–418 (KKKAQSTEKHQE). Phosphoserine is present on residues S443, S463, and S494. Phosphothreonine is present on T498. Phosphoserine occurs at positions 568, 577, 628, and 631. The tract at residues 602–854 (ELSATVENET…PHINKQNSSV (253 aa)) is disordered. Residues 620-631 (LRSTSCTTSLAS) are compositionally biased toward polar residues. T639 bears the Phosphothreonine mark. Positions 645–654 (NEEKLLESSR) are enriched in basic and acidic residues. Residue S662 is modified to Phosphoserine. Positions 663–691 (EIGEKQDTELQEKEAQVYQSEKHDADRGL) are enriched in basic and acidic residues. Phosphoserine is present on S718. Residues 720 to 731 (SKEKSETEKETS) show a composition bias toward basic and acidic residues. T752 carries the post-translational modification Phosphothreonine. Composition is skewed to basic and acidic residues over residues 764–774 (HIDKCREESSK) and 789–821 (SKGD…KESS). Over residues 822–839 (KSLVRQGSFTIDKPSSNI) the composition is skewed to polar residues. A phosphoserine mark is found at S829, S870, and S872. Residues 844–1588 (IPHINKQNSS…GEEEDVTVHE (745 aa)) are targeting to microtubules. Residues 899–908 (LREDNNKTDE) are compositionally biased toward basic and acidic residues. Disordered stretches follow at residues 899–1222 (LRED…RWRR) and 1228–1247 (ASTS…HTRL). Phosphothreonine occurs at positions 906 and 912. The segment covering 913-937 (PSYNRDNSISPESDVDTASTISLVT) has biased composition (polar residues). 3 positions are modified to phosphoserine: S922, S925, and S950. A compositionally biased stretch (basic and acidic residues) spans 967 to 980 (DVTKSGSREKIEKK). S1008 carries the post-translational modification Phosphoserine. Position 1012 is a phosphothreonine (T1012). The segment covering 1028-1038 (IMSSDQETYSC) has biased composition (polar residues). A Phosphothreonine modification is found at T1047. S1048 is subject to Phosphoserine. Positions 1049–1062 (ADEHNIHSKLEGGK) are enriched in basic and acidic residues. A compositionally biased stretch (low complexity) spans 1075-1093 (STSKSTTLPRPRPTRTSLL). Phosphoserine occurs at positions 1102, 1104, 1122, 1123, 1135, 1150, and 1155. A targeting to centrosomes region spans residues 1103–1588 (DSELADADKA…GEEEDVTVHE (486 aa)). Positions 1112–1128 (ASVASEVSTTSSTSKPP) are enriched in low complexity. The segment covering 1158 to 1173 (EATISRSSASARTAEA) has biased composition (low complexity). Phosphoserine is present on residues S1188, S1195, S1200, S1229, S1231, S1241, S1260, and S1270. Over residues 1191-1218 (TRANSISRLSDSKVKSMSSTHGSPSVNS) the composition is skewed to polar residues. The tract at residues 1315–1334 (SVTSSGTAPSTTVSTAATTP) is disordered. A Phosphoserine modification is found at S1362. Residues 1370–1398 (PLVHSKTPEGNNGRSVDSRPQPAEHPDHL) are disordered. A coiled-coil region spans residues 1467-1495 (KTSSMEISSILQELKRVEKQLQVINAMID). The interval 1511-1540 (AILPSPPKQKSSPVNNHSSPSQTPALCPPE) is disordered. The segment covering 1518 to 1534 (KQKSSPVNNHSSPSQTP) has biased composition (polar residues). 2 positions are modified to phosphoserine: S1521 and S1522.

It belongs to the CEP170 family. In terms of assembly, interacts with CCDC68 and CCDC120; leading to recruitment to centrosomes. Interacts with PLK1. Interacts with NIN. Interacts with FHDC1. Interacts with CCDC61. Interacts with TBK1; efficient complex formation may be dependent on the presence of CCDC61. Post-translationally, phosphorylated; probably by PLK1.

The protein resides in the cytoplasm. The protein localises to the cytoskeleton. It is found in the microtubule organizing center. It localises to the centrosome. Its subcellular location is the centriole. The protein resides in the spindle. Functionally, plays a role in microtubule organization. Required for centriole subdistal appendage assembly. The polypeptide is Centrosomal protein of 170 kDa (Cep170) (Mus musculus (Mouse)).